Reading from the N-terminus, the 317-residue chain is Acetyl-coenzyme A carboxylase carboxyl transferase subunit alpha (317 aa).

In terms of domain architecture, CoA carboxyltransferase C-terminal spans 40 to 293 (LEGRVRDAMM…GTVIADALKE (254 aa)).

Belongs to the AccA family. In terms of assembly, acetyl-CoA carboxylase is a heterohexamer composed of biotin carboxyl carrier protein (AccB), biotin carboxylase (AccC) and two subunits each of ACCase subunit alpha (AccA) and ACCase subunit beta (AccD).

It is found in the cytoplasm. The catalysed reaction is N(6)-carboxybiotinyl-L-lysyl-[protein] + acetyl-CoA = N(6)-biotinyl-L-lysyl-[protein] + malonyl-CoA. It participates in lipid metabolism; malonyl-CoA biosynthesis; malonyl-CoA from acetyl-CoA: step 1/1. Functionally, component of the acetyl coenzyme A carboxylase (ACC) complex. First, biotin carboxylase catalyzes the carboxylation of biotin on its carrier protein (BCCP) and then the CO(2) group is transferred by the carboxyltransferase to acetyl-CoA to form malonyl-CoA. The polypeptide is Acetyl-coenzyme A carboxylase carboxyl transferase subunit alpha (Sinorhizobium fredii (strain NBRC 101917 / NGR234)).